A 213-amino-acid polypeptide reads, in one-letter code: Adenylate kinase (213 aa).

An ATP-binding site is contributed by 10–15; sequence GAGKGT. The NMP stretch occupies residues 30–59; sequence STGDMFRAAMANQTEMGLLAKSYIDKGDLV. AMP contacts are provided by residues threonine 31, arginine 36, 57 to 59, 86 to 89, and glutamine 93; these read DLV and GYPR. Residues 127–160 form an LID region; that stretch reads GRIIHKKTGETFHKIFNPPAGDYDENDYYQREDD. ATP is bound by residues arginine 128 and 137 to 138; that span reads TF. Positions 157 and 168 each coordinate AMP. Glutamine 196 provides a ligand contact to ATP.

This sequence belongs to the adenylate kinase family. Monomer.

The protein localises to the cytoplasm. It catalyses the reaction AMP + ATP = 2 ADP. It functions in the pathway purine metabolism; AMP biosynthesis via salvage pathway; AMP from ADP: step 1/1. In terms of biological role, catalyzes the reversible transfer of the terminal phosphate group between ATP and AMP. Plays an important role in cellular energy homeostasis and in adenine nucleotide metabolism. This chain is Adenylate kinase, found in Streptococcus uberis (strain ATCC BAA-854 / 0140J).